Here is a 155-residue protein sequence, read N- to C-terminus: Large ribosomal subunit protein uL22c (155 aa).

It belongs to the universal ribosomal protein uL22 family. Part of the 50S ribosomal subunit.

The protein localises to the plastid. The protein resides in the chloroplast. Its function is as follows. This protein binds specifically to 23S rRNA. In terms of biological role, the globular domain of the protein is located near the polypeptide exit tunnel on the outside of the subunit, while an extended beta-hairpin is found that lines the wall of the exit tunnel in the center of the 70S ribosome. This chain is Large ribosomal subunit protein uL22c (rpl22), found in Solanum tuberosum (Potato).